Here is a 333-residue protein sequence, read N- to C-terminus: Torsin-1A (333 aa).

The signal sequence occupies residues 1-20 (MKLGRAALALLLLAPCVVRA). An interaction with SNAPIN region spans residues 92-252 (KPKKPLTLSL…VSVFNNKNSG (161 aa)). 103–110 (GWTGTGKN) contacts ATP. N-linked (GlcNAc...) asparagine glycosylation is found at N144 and N159. Residues 252–333 (GFWHSSLIDR…FTKLDYYLDD (82 aa)) form an interaction with KLC1 region. The tract at residues 313–333 (KVFSDKGCKTVFTKLDYYLDD) is interaction with SYNE3.

This sequence belongs to the ClpA/ClpB family. Torsin subfamily. Homohexamer. Interacts with TOR1B; the interaction may be specific of neural tissues. Interacts (ATP-bound) with TOR1AIP1 and TOR1AIP2; the interactions induce ATPase activity. Interacts with KLHL14; preferentially when ATP-free. Interacts with KLC1 (via TPR repeats); the interaction associates TOR1A with the kinesin oligomeric complex. Interacts with COPS4; the interaction associates TOR1A with the CSN complex. Interacts with SNAPIN; the interaction is direct and associates SNAPIN with the CSN complex. Interacts with STON2. Interacts (ATP-bound) with SYNE3 (via KASH domain); the interaction is required for SYNE3 nuclear envelope localization. Interacts with VIM; the interaction associates TOR1A with the cytoskeleton. Interacts with PLEC. Interacts (ATP-bound) with SLC6A3; regulates SLC6A3 transport to the plasma membrane. Post-translationally, N-glycosylated. As to expression, widely expressed (at protein level).

It localises to the endoplasmic reticulum lumen. The protein resides in the nucleus membrane. The protein localises to the cell projection. It is found in the growth cone. Its subcellular location is the cytoplasmic vesicle membrane. It localises to the synapse. The protein resides in the synaptosome. The protein localises to the cytoplasm. It is found in the cytoskeleton. Its subcellular location is the cytoplasmic vesicle. It localises to the secretory vesicle. The protein resides in the synaptic vesicle. It carries out the reaction ATP + H2O = ADP + phosphate + H(+). Its function is as follows. Protein with chaperone functions important for the control of protein folding, processing, stability and localization as well as for the reduction of misfolded protein aggregates. Involved in the regulation of synaptic vesicle recycling, controls STON2 protein stability in collaboration with the COP9 signalosome complex (CSN). In the nucleus, may link the cytoskeleton with the nuclear envelope, this mechanism seems to be crucial for the control of nuclear polarity, cell movement and, specifically in neurons, nuclear envelope integrity. Participates in the cellular trafficking and may regulate the subcellular location of multipass membrane proteins such as the dopamine transporter SLC6A3, leading to the modulation of dopamine neurotransmission. In the endoplasmic reticulum, plays a role in the quality control of protein folding by increasing clearance of misfolded proteins such as SGCE variants or holding them in an intermediate state for proper refolding. May have a redundant function with TOR1B in non-neural tissues. In Mus musculus (Mouse), this protein is Torsin-1A (Tor1a).